Reading from the N-terminus, the 597-residue chain is uncharacterized protein (597 aa).

2 consecutive transmembrane segments (helical) span residues L4–V23 and F209–I231.

The protein localises to the cell membrane. This is an uncharacterized protein from Archaeoglobus fulgidus (strain ATCC 49558 / DSM 4304 / JCM 9628 / NBRC 100126 / VC-16).